A 714-amino-acid polypeptide reads, in one-letter code: Polyribonucleotide nucleotidyltransferase (714 aa).

2 residues coordinate Mg(2+): D489 and D495. The 60-residue stretch at 556-615 (PKIDTIKIDVDKIKVVIGKGGETIDKIIAETGVKIDIDEEGNVSIYSSDQDAINRAKEII) folds into the KH domain. The region spanning 625–693 (GEVYHAKVVR…DKGRIDASMK (69 aa)) is the S1 motif domain. The disordered stretch occupies residues 691-714 (SMKALVPRPPKPEKSEAKKEGKHD). The segment covering 700–714 (PKPEKSEAKKEGKHD) has biased composition (basic and acidic residues).

Belongs to the polyribonucleotide nucleotidyltransferase family. Mg(2+) is required as a cofactor.

Its subcellular location is the cytoplasm. The catalysed reaction is RNA(n+1) + phosphate = RNA(n) + a ribonucleoside 5'-diphosphate. In terms of biological role, involved in mRNA degradation. Catalyzes the phosphorolysis of single-stranded polyribonucleotides processively in the 3'- to 5'-direction. The polypeptide is Polyribonucleotide nucleotidyltransferase (Streptococcus equi subsp. equi (strain 4047)).